The sequence spans 256 residues: Ciliary microtubule associated protein 1A (256 aa).

3 STPGR repeats span residues P66–R92, P181–R206, and P217–R242.

It belongs to the CIMAP family.

It localises to the cytoplasm. The protein resides in the cytoskeleton. The protein localises to the flagellum axoneme. Its function is as follows. Outer dense fibers are filamentous structures located on the outside of the axoneme in the midpiece and principal piece of the mammalian sperm tail. May help to maintain the passive elastic structures and elastic recoil of the sperm tail. The chain is Ciliary microtubule associated protein 1A (cimap1a) from Xenopus tropicalis (Western clawed frog).